The chain runs to 471 residues: Glutamate--tRNA ligase (471 aa).

The 'HIGH' region signature appears at 9–19; it reads PSPTGYLHVGG. Zn(2+) is bound by residues C98, C100, C125, and H127. The 'KMSKS' region signature appears at 237–241; it reads KLSKR. K240 serves as a coordination point for ATP.

This sequence belongs to the class-I aminoacyl-tRNA synthetase family. Glutamate--tRNA ligase type 1 subfamily. Monomer. It depends on Zn(2+) as a cofactor.

Its subcellular location is the cytoplasm. It carries out the reaction tRNA(Glu) + L-glutamate + ATP = L-glutamyl-tRNA(Glu) + AMP + diphosphate. Catalyzes the attachment of glutamate to tRNA(Glu) in a two-step reaction: glutamate is first activated by ATP to form Glu-AMP and then transferred to the acceptor end of tRNA(Glu). The protein is Glutamate--tRNA ligase of Salmonella enteritidis PT4 (strain P125109).